Here is a 626-residue protein sequence, read N- to C-terminus: Cysteine desulfurase (626 aa).

2 disordered regions span residues 1-21 and 41-64; these read MTNT…SDPF and AGVS…PTTS. A cargo-loading domain region spans residues 1 to 225; that stretch reads MTNTVPSVPA…AGAVGFDIHQ (225 aa). The interval 226 to 626 is cysteine desulfurase domain; it reads VRRDFPILQE…RRIQTGSLAL (401 aa). The residue at position 444 (K444) is an N6-(pyridoxal phosphate)lysine. Catalysis depends on C582, which acts as the Cysteine persulfide intermediate.

It belongs to the class-V pyridoxal-phosphate-dependent aminotransferase family. Csd subfamily. There are 1-2 copies of this protein in each type 2A encapsulin shell. Pyridoxal 5'-phosphate is required as a cofactor.

The protein localises to the encapsulin nanocompartment. It carries out the reaction (sulfur carrier)-H + L-cysteine = (sulfur carrier)-SH + L-alanine. Encapsulated enzyme is 7-fold more active than encapsulated enzyme. Its function is as follows. Cargo protein of a type 2A encapsulin nanocompartment probably involved in sulfur metabolism. Cysteine desulfurases mobilize the sulfur from L-cysteine to yield L-alanine, an essential step in sulfur metabolism for biosynthesis of a variety of sulfur-containing biomolecules. The protein is Cysteine desulfurase of Synechococcus elongatus (strain ATCC 33912 / PCC 7942 / FACHB-805) (Anacystis nidulans R2).